The following is a 284-amino-acid chain: Nucleoid occlusion protein (284 aa).

Positions 143-162 (EALAQRVGKSQSAIANKMRL) form a DNA-binding region, H-T-H motif.

The protein belongs to the ParB family.

The protein localises to the cytoplasm. It localises to the nucleoid. In terms of biological role, effects nucleoid occlusion by binding relatively nonspecifically to DNA and preventing the assembly of the division machinery in the vicinity of the nucleoid, especially under conditions that disturb the cell cycle. It helps to coordinate cell division and chromosome segregation by preventing the formation of the Z ring through the nucleoid, which would cause chromosome breakage. The sequence is that of Nucleoid occlusion protein from Listeria monocytogenes serotype 4b (strain CLIP80459).